A 159-amino-acid chain; its full sequence is Small ribosomal subunit protein uS4 (159 aa).

The S4 RNA-binding domain occupies 106–158; sequence RRLQTIVYRMGLAKSIHHARQLIVHGHVAVAGRRVTSPGFLVPRELEDKISLI.

It belongs to the universal ribosomal protein uS4 family. In terms of assembly, part of the 30S ribosomal subunit. Contacts protein S5. The interaction surface between S4 and S5 is involved in control of translational fidelity.

Its function is as follows. One of the primary rRNA binding proteins, it binds directly to 16S rRNA where it nucleates assembly of the body of the 30S subunit. With S5 and S12 plays an important role in translational accuracy. This chain is Small ribosomal subunit protein uS4, found in Pyrobaculum aerophilum (strain ATCC 51768 / DSM 7523 / JCM 9630 / CIP 104966 / NBRC 100827 / IM2).